The chain runs to 300 residues: Putative S-adenosyl-L-methionine-dependent methyltransferase MUL_0817 (300 aa).

Residues Asp127 and 156–157 (DL) contribute to the S-adenosyl-L-methionine site.

It belongs to the UPF0677 family.

In terms of biological role, exhibits S-adenosyl-L-methionine-dependent methyltransferase activity. The chain is Putative S-adenosyl-L-methionine-dependent methyltransferase MUL_0817 from Mycobacterium ulcerans (strain Agy99).